A 460-amino-acid chain; its full sequence is 3-isopropylmalate dehydratase large subunit (460 aa).

The [4Fe-4S] cluster site is built by C338, C398, and C401.

The protein belongs to the aconitase/IPM isomerase family. LeuC type 1 subfamily. Heterodimer of LeuC and LeuD. [4Fe-4S] cluster serves as cofactor.

It carries out the reaction (2R,3S)-3-isopropylmalate = (2S)-2-isopropylmalate. It participates in amino-acid biosynthesis; L-leucine biosynthesis; L-leucine from 3-methyl-2-oxobutanoate: step 2/4. Functionally, catalyzes the isomerization between 2-isopropylmalate and 3-isopropylmalate, via the formation of 2-isopropylmaleate. The protein is 3-isopropylmalate dehydratase large subunit of Streptococcus sanguinis (strain SK36).